We begin with the raw amino-acid sequence, 2910 residues long: Highly reducing polyketide synthase calA (2910 aa).

The Ketosynthase family 3 (KS3) domain maps to 8–444 (NEPLAIVGSA…GTNAHAILES (437 aa)). Catalysis depends on for beta-ketoacyl synthase activity residues C181, H320, and H364. Residues 559-875 (VFTGQGAQYA…PYYGVLSRGT (317 aa)) form an acyl transferase (AT) domain region. Residues 948–1082 (NQLLGTMMPD…LHIVFGPSSE (135 aa)) are N-terminal hotdog fold. The PKS/mFAS DH domain occupies 948-1245 (NQLLGTMMPD…LKPLGALTAK (298 aa)). The segment at 949–1242 (QLLGTMMPDS…GVELKPLGAL (294 aa)) is dehydratase (DH) domain. Residue H980 is the Proton acceptor; for dehydratase activity of the active site. The segment at 1095–1245 (MISVDNERFY…LKPLGALTAK (151 aa)) is C-terminal hotdog fold. D1156 serves as the catalytic Proton donor; for dehydratase activity. Positions 1399–1586 (EAGLWIGKII…GIDSTAPQAF (188 aa)) are methyltransferase (MT) domain. The interval 2125–2298 (TYWLCGLSGA…AATALNVGAI (174 aa)) is ketoreductase (KR)domain. The Carrier domain maps to 2406–2488 (QSRSEVLAVV…ELAELAAEQA (83 aa)). S2448 is modified (O-(pantetheine 4'-phosphoryl)serine). A disordered region spans residues 2492-2565 (LLPGLGGEAP…TPDPHSTKGP (74 aa)). Positions 2522 to 2534 (VPQSDETGSSSAD) are enriched in polar residues. The span at 2550 to 2559 (GYTTPTTPDP) shows a compositional bias: low complexity. The interval 2597–2826 (LTGVSGLLGR…DFVYVKNAAD (230 aa)) is reductase (R) domain.

Its pathway is secondary metabolite biosynthesis. In terms of biological role, highly reducing polyketide synthase; part of the gene cluster that mediates the biosynthesis of calbistrin A and related compounds. Calbistrin A is a secondary metabolite with an interesting structure that was recently found to have bioactivity against leukemia cells. It consists of two polyketides linked by an ester bond: a bicyclic decalin containing polyketide and a linear 12 carbon dioic acid structure. The polyketide synthase calA is probably responsible for forming the decalin moiety. Because calA lacks a designated enoylreductase (ER) domain, the required activity is provided by the trans-enoyl reductase calK. Following release from the PKS, calF then probably catalyzes the oxidation and the subsequent Diels Alder cycloisomerization that lead to the formation of the decalin moiety. The decalin polyketide backbone includes two C-methyl groups, at C7 and C11 in backbone, of which the C7 position is probably methylated by the methyltransferase domain of calA. A candidate for adding the methyl group at C11, if not done by CalA, is the cluster methyltransferase calH. Several additional tailoring enzymes within the cluster could be involved in the modification of the decalin polyketide product. Those include the 3 cytochrome P450 monooxygenases CalE, CalG and CalL, of which one might be responsible for the introduction of the extra hydroxyl group attached to the backbone of the decalin moiety, at position C9 in the backbone, that allows for attachment of the linear moiety. One tailoring enzyme activity that is expected to be involved in biosynthesis of calbistrin is an acyltransferase for connecting the two polyketide synthase products, and which could be performed by the cluster acyltransferase calJ. The enzyme responsible for the biosynthesis of the linear moiety, probably a second PKS, has not been identified yet. This is Highly reducing polyketide synthase calA from Penicillium decumbens.